The following is a 1393-amino-acid chain: MRDLLKIHKLEQKEQDFDAIRVGLASPEKIRSWSYGEVKKPETINYRTFKPEREGLFCAKVFGPMKDFECLCGKYKRMKFRNVVCEKCGVEVTYSKVRRERMGHIELAAPVAHIWYLKSLPSRLGLLMDMTLKDIERVLYFEAFLVTDPGSTPLVHKQLLTEEMYFDALDEYGDDEFEAKMGAEAIQDVLSDMKLEVEAANLREDSLNTKSQTKLKKYNKRLKLVNSLIQSGNKPEWMVLKVLPILPSDLRPLVPLDGGRFATSDLNDLYRRVINRNNRLARLLELDAPEIIVRNEKRMLQEAVDSLIDNGRRGRAVMGNNRRPLKSISDMIKGKQGRFRQNLLGKRVDYSGRSVIVCGPYLKLHQCGLPKKMALELFKPFIYNRLQTKGLASTIKAAKKMVESESPEVWDILERVVHQHPVLLNRAPTLHRLGIQAFEPLLIEGKAIQLHPLVCGAFNADFDGDQMAVHVPLSEEAQLEARTLMLASNNVLHLASGEPIIVPSQDVILGLYYMTREMINQKGEGLIFVNATEALNAYESDSVTLHAKVKLRIQDYHKVNGKFEPSAKRIVDTTVGRAIFSRILPNGLSFNLINEAISKKVVSNLIHVCYRTQELKQTVMFADQMMYMGFQYSTKSGISFCSNDMIIPDSKAKMIEQAEIQVKDIQEQFSKGVVTDGERYNKVIDIWSRTSEKVAKAMMDEIGFENFTDVDGKIQKLASFNSVYMMADSGARGSPAQMRQLSGMRGLMAKPDGSIIETPITSNFREGLNNMQYFISTHGARKGLADTALKTANSGYLTRRLVDVGQDLVITENDCGTDNGLIMKAVIDGGNIVQTLGTATLGRVTAEDVLMPDSIEIFLEKGHLVSLDDSDKINELGIESIKVRSSITCDTRYGVCSSCYGNDMARGHKIGVGEAIGVIAAQSIGEPGTQLTMRTFHIGGAASASTAVSSINVNTDGIAHFENLKSITNENNDLVVISRSSEVTIRNNKGQEVERYKIPYGAIVHVQEGGAVTAKDKISDWDPHTHPIISEQAGRVIFVDFVEGMTVNKNTDPLTGLTFFEMIDEAERSTAAKGLKPLIKMVEENDSEVVLSTHYLPSTVKINLDDNQVIAAGGVLAKIPKDLSKTSDITGGLPRVADLFEARKAKDHSILAEATGVISFGNSTKSKDRLIITSSEGKATEMMIHKWSQINVFDGETIEKGDVISDGPSNPHDILRLLGVEALANYVVREVQNVYRLQGVNISDKHIEVIVKQMLRKVEILDAGDSSFVNGETAEYGRVIEMNYQLEAQGKDLINYQRLLMGITKASLATESFISAASFQETTRVLTEASTTGRVDTLQGLKENVIVGRLIPAGTGFKHHQVRRAQYVESITTQTVDAQQALSDQLKEAEEQT.

Zn(2+)-binding residues include cysteine 70, cysteine 72, cysteine 85, and cysteine 88. The Mg(2+) site is built by aspartate 461, aspartate 463, and aspartate 465. Cysteine 815, cysteine 889, cysteine 896, and cysteine 899 together coordinate Zn(2+).

Belongs to the RNA polymerase beta' chain family. In terms of assembly, the RNAP catalytic core consists of 2 alpha, 1 beta, 1 beta' and 1 omega subunit. When a sigma factor is associated with the core the holoenzyme is formed, which can initiate transcription. The cofactor is Mg(2+). Zn(2+) is required as a cofactor.

The catalysed reaction is RNA(n) + a ribonucleoside 5'-triphosphate = RNA(n+1) + diphosphate. Its function is as follows. DNA-dependent RNA polymerase catalyzes the transcription of DNA into RNA using the four ribonucleoside triphosphates as substrates. This is DNA-directed RNA polymerase subunit beta' from Vesicomyosocius okutanii subsp. Calyptogena okutanii (strain HA).